A 258-amino-acid chain; its full sequence is UPF0246 protein Bpro_3713 (258 aa).

Belongs to the UPF0246 family.

The chain is UPF0246 protein Bpro_3713 from Polaromonas sp. (strain JS666 / ATCC BAA-500).